The chain runs to 867 residues: Armadillo repeat-containing protein 2 (867 aa).

2 disordered regions span residues 1-115 and 214-252; these read MLSP…CFSF and TSLP…AVPK. Polar residues-rich tracts occupy residues 18–28, 40–50, and 60–69; these read PSVSKQKTSAE, VRTQRPFTPQE, and SSRTSENRPP. Composition is skewed to low complexity over residues 70–81 and 234–243; these read SSFSLHASSFES and SSCPSSSDLS. ARM repeat units follow at residues 262–301, 304–344, 363–403, 408–449, 462–503, 506–547, 551–589, 591–616, 619–662, 664–705, 707–746, and 748–790; these read IEVD…HALE, NMLG…ALKV, EKND…SIKF, LGFL…HLLV, SLVR…KLTS, DCCT…NLTA, QARE…QRGE, HRAQ…NIAI, GVGP…NLSY, QVKN…NLSQ, HDVC…NLTV, and KDKR…NFSE.

As to expression, expressed at higher level in testis.

Functionally, required for sperm flagellum axoneme organization and function. Involved in axonemal central pair complex assembly and/or stability. This is Armadillo repeat-containing protein 2 from Homo sapiens (Human).